Here is an 809-residue protein sequence, read N- to C-terminus: H(+)/Cl(-) exchange transporter 7 (809 aa).

Residues 1–130 lie on the Cytoplasmic side of the membrane; that stretch reads MANVSKKVSW…TAFRTVEIKR (130 aa). 2 positions are modified to phosphoserine: Ser9 and Ser64. 2 helical membrane-spanning segments follow: residues 131 to 163 and 178 to 201; these read WVIC…YRLV and FSLL…VAFI. Residues 207-211 carry the Selectivity filter part_1 motif; the sequence is GSGIP. Ser208 provides a ligand contact to chloride. The segment at residues 210 to 217 is an intramembrane region (helical); that stretch reads IPQIKCFL. 2 consecutive transmembrane segments (helical) span residues 227–245 and 251–268; these read RLKT…VVGG and EGPM…ISQG. The Selectivity filter part_2 motif lies at 249–253; that stretch reads GKEGP. 2 intramembrane regions (helical) span residues 292-304 and 308-316; these read FVSA…VSAA and PVGGVLFSL. Helical transmembrane passes span 326 to 345, 379 to 409, 414 to 436, 491 to 511, and 516 to 539; these read FLTW…LNFV, IPIF…FRIR, PCLQ…FVLI, PMTL…TYGL, and GVFI…LSYI. A Selectivity filter part_3 motif is present at residues 516-520; sequence GVFIP. Phe518 serves as a coordination point for chloride. The segment at residues 549 to 563 is an intramembrane region (helical); sequence GKYALMGAAAQLGGI. Residues 564–566 constitute an intramembrane region (note=Loop between two helices); sequence VRM. Positions 567-578 form an intramembrane region, helical; it reads TLSLTVIMMEAT. An intramembrane region (note=Loop between two helices) is located at residues 579 to 582; the sequence is SSVT. Residues 583-601 traverse the membrane as a helical segment; sequence YGFPIMLVLMTAKIVGDVF. Over 602 to 809 the chain is Cytoplasmic; the sequence is IEGLYDMHIQ…GLEELSLAQT (208 aa). Tyr606 is a binding site for chloride. CBS domains are found at residues 635–699 and 745–803; these read MSTP…VFVE and MNPS…GLEE. ATP-binding positions include 662 to 664 and 787 to 790; these read HNG and TRKD. Ser805 is subject to Phosphoserine.

This sequence belongs to the chloride channel (TC 2.A.49) family. ClC-7/CLCN7 subfamily. Chloride channel 7 are heteromers of alpha (CLCN7) and beta (OSTM1) subunits.

The protein localises to the lysosome membrane. The enzyme catalyses 2 chloride(in) + H(+)(out) = 2 chloride(out) + H(+)(in). Slowly voltage-gated channel mediating the exchange of chloride ions against protons. Functions as antiporter and contributes to the acidification of the lysosome lumen and may be involved in maintaining lysosomal pH. The CLC channel family contains both chloride channels and proton-coupled anion transporters that exchange chloride or another anion for protons. The presence of conserved gating glutamate residues is typical for family members that function as antiporters. The chain is H(+)/Cl(-) exchange transporter 7 (CLCN7) from Bos taurus (Bovine).